The sequence spans 227 residues: Uridylate kinase (227 aa).

Position 9 to 10 (9 to 10 (GS)) interacts with ATP. Glycine 44 provides a ligand contact to UMP. ATP contacts are provided by glycine 45 and arginine 49. Residues aspartate 66 and 114–120 (TVPGHTT) each bind UMP. Positions 140, 146, and 149 each coordinate ATP.

Belongs to the UMP kinase family. In terms of assembly, homohexamer.

The protein resides in the cytoplasm. The enzyme catalyses UMP + ATP = UDP + ADP. It functions in the pathway pyrimidine metabolism; CTP biosynthesis via de novo pathway; UDP from UMP (UMPK route): step 1/1. With respect to regulation, inhibited by UTP. Its function is as follows. Catalyzes the reversible phosphorylation of UMP to UDP. This is Uridylate kinase from Natronomonas pharaonis (strain ATCC 35678 / DSM 2160 / CIP 103997 / JCM 8858 / NBRC 14720 / NCIMB 2260 / Gabara) (Halobacterium pharaonis).